We begin with the raw amino-acid sequence, 389 residues long: Succinate--CoA ligase [ADP-forming] subunit beta (389 aa).

Positions 9–244 (KQLFADYGLP…ETQEDPREVE (236 aa)) constitute an ATP-grasp domain. ATP-binding positions include K46, 53-55 (GRG), E99, G102, and E107. Positions 199 and 213 each coordinate Mg(2+). Residues N264 and 321-323 (GIV) contribute to the substrate site.

Belongs to the succinate/malate CoA ligase beta subunit family. As to quaternary structure, heterotetramer of two alpha and two beta subunits. The cofactor is Mg(2+).

The enzyme catalyses succinate + ATP + CoA = succinyl-CoA + ADP + phosphate. The catalysed reaction is GTP + succinate + CoA = succinyl-CoA + GDP + phosphate. The protein operates within carbohydrate metabolism; tricarboxylic acid cycle; succinate from succinyl-CoA (ligase route): step 1/1. Its function is as follows. Succinyl-CoA synthetase functions in the citric acid cycle (TCA), coupling the hydrolysis of succinyl-CoA to the synthesis of either ATP or GTP and thus represents the only step of substrate-level phosphorylation in the TCA. The beta subunit provides nucleotide specificity of the enzyme and binds the substrate succinate, while the binding sites for coenzyme A and phosphate are found in the alpha subunit. The protein is Succinate--CoA ligase [ADP-forming] subunit beta of Tolumonas auensis (strain DSM 9187 / NBRC 110442 / TA 4).